The sequence spans 122 residues: Large ribosomal subunit protein uL18 (122 aa).

Belongs to the universal ribosomal protein uL18 family. As to quaternary structure, part of the 50S ribosomal subunit; part of the 5S rRNA/L5/L18/L25 subcomplex. Contacts the 5S and 23S rRNAs.

This is one of the proteins that bind and probably mediate the attachment of the 5S RNA into the large ribosomal subunit, where it forms part of the central protuberance. This Desulfatibacillum aliphaticivorans protein is Large ribosomal subunit protein uL18.